Consider the following 434-residue polypeptide: Eukaryotic translation initiation factor 3 subunit E (434 aa).

One can recognise a PCI domain in the interval 219–392 (FFNHPKGRDL…GHVVMGTQPL (174 aa)).

Belongs to the eIF-3 subunit E family. Component of the eukaryotic translation initiation factor 3 (eIF-3) complex. The eIF-3 complex interacts with pix. Interacts with mxt.

It is found in the cytoplasm. In terms of biological role, component of the eukaryotic translation initiation factor 3 (eIF-3) complex, which is involved in protein synthesis of a specialized repertoire of mRNAs and, together with other initiation factors, stimulates binding of mRNA and methionyl-tRNAi to the 40S ribosome. The eIF-3 complex specifically targets and initiates translation of a subset of mRNAs involved in cell proliferation. The chain is Eukaryotic translation initiation factor 3 subunit E (eIF3-S6) from Drosophila ananassae (Fruit fly).